The following is a 270-amino-acid chain: Sorting nexin-11 (270 aa).

Residues 16–132 enclose the PX domain; it reads VITVRVQDPR…HLFLQSQLSV (117 aa). Arg59, Lys85, and Arg99 together coordinate a 1,2-diacyl-sn-glycero-3-phospho-(1D-myo-inositol-3-phosphate). The segment at 135–139 is important for membrane trafficking; sequence IEACV. Positions 168-177 are enriched in basic and acidic residues; it reads GSSHLAEGDQ. 2 disordered regions span residues 168–244 and 251–270; these read GSSH…LSAS and LGGGHAVPLDPGQLETVLEK. Pro residues predominate over residues 218-227; the sequence is LESPTLPPTS.

This sequence belongs to the sorting nexin family. In terms of assembly, monomer. Interacts with TRPV3; this interaction promotes TRPV3 trafficking from the cell membrane to lysosome for degradation.

Its subcellular location is the cell membrane. The protein localises to the endosome. It localises to the cytoplasm. Functionally, phosphoinositide-binding protein involved in protein sorting and membrane trafficking in endosomes. Regulates the levels of TRPV3 by promoting its trafficking from the cell membrane to lysosome for degradation. The chain is Sorting nexin-11 (SNX11) from Bos taurus (Bovine).